The sequence spans 122 residues: Large ribosomal subunit protein bL19c (122 aa).

This sequence belongs to the bacterial ribosomal protein bL19 family.

Its subcellular location is the plastid. It is found in the chloroplast. This chain is Large ribosomal subunit protein bL19c (rpl19), found in Rhodomonas salina (Cryptomonas salina).